The following is a 129-amino-acid chain: Ribulose bisphosphate carboxylase small subunit (129 aa).

The protein belongs to the RuBisCO small chain family. In terms of assembly, heterohexadecamer of 8 large and 8 small subunits.

RuBisCO catalyzes two reactions: the carboxylation of D-ribulose 1,5-bisphosphate, the primary event in carbon dioxide fixation, as well as the oxidative fragmentation of the pentose substrate. Both reactions occur simultaneously and in competition at the same active site. Although the small subunit is not catalytic it is essential for maximal activity. In Cereibacter sphaeroides (Rhodobacter sphaeroides), this protein is Ribulose bisphosphate carboxylase small subunit.